We begin with the raw amino-acid sequence, 98 residues long: NADH-ubiquinone oxidoreductase chain 4L (98 aa).

A run of 3 helical transmembrane segments spans residues 1–21 (MTPV…GLAF), 29–49 (ALLC…LWAL), and 58–78 (VAPM…LALL).

It belongs to the complex I subunit 4L family.

It is found in the mitochondrion membrane. It catalyses the reaction a ubiquinone + NADH + 5 H(+)(in) = a ubiquinol + NAD(+) + 4 H(+)(out). In terms of biological role, core subunit of the mitochondrial membrane respiratory chain NADH dehydrogenase (Complex I) which catalyzes electron transfer from NADH through the respiratory chain, using ubiquinone as an electron acceptor. Part of the enzyme membrane arm which is embedded in the lipid bilayer and involved in proton translocation. The sequence is that of NADH-ubiquinone oxidoreductase chain 4L (MT-ND4L) from Salmo salar (Atlantic salmon).